Consider the following 805-residue polypeptide: Phenylalanine--tRNA ligase beta subunit (805 aa).

A tRNA-binding domain is found at 39–148 (APPFTGVVVA…AALRPGTDIR (110 aa)). A B5 domain is found at 399 to 474 (PVREPVRMRL…RVYGFERIPD (76 aa)). Mg(2+)-binding residues include Asp452, Asp458, Glu461, and Glu462. The region spanning 703–804 (SRQPAVVRDL…LVAAHNARQR (102 aa)) is the FDX-ACB domain.

This sequence belongs to the phenylalanyl-tRNA synthetase beta subunit family. Type 1 subfamily. In terms of assembly, tetramer of two alpha and two beta subunits. The cofactor is Mg(2+).

It is found in the cytoplasm. It carries out the reaction tRNA(Phe) + L-phenylalanine + ATP = L-phenylalanyl-tRNA(Phe) + AMP + diphosphate + H(+). The chain is Phenylalanine--tRNA ligase beta subunit from Bordetella parapertussis (strain 12822 / ATCC BAA-587 / NCTC 13253).